We begin with the raw amino-acid sequence, 431 residues long: UDP-N-acetylmuramate--L-alanine ligase (431 aa).

Gly-108–Thr-114 is an ATP binding site.

Belongs to the MurCDEF family.

Its subcellular location is the cytoplasm. It catalyses the reaction UDP-N-acetyl-alpha-D-muramate + L-alanine + ATP = UDP-N-acetyl-alpha-D-muramoyl-L-alanine + ADP + phosphate + H(+). Its pathway is cell wall biogenesis; peptidoglycan biosynthesis. Cell wall formation. The protein is UDP-N-acetylmuramate--L-alanine ligase of Campylobacter jejuni subsp. jejuni serotype O:23/36 (strain 81-176).